We begin with the raw amino-acid sequence, 109 residues long: uncharacterized protein (109 aa).

The segment at 77-98 (TRTGHAYPRFTRPSFPSCNRNG) is disordered.

This is an uncharacterized protein from Homo sapiens (Human).